Here is a 310-residue protein sequence, read N- to C-terminus: tRNA dimethylallyltransferase (310 aa).

13-20 serves as a coordination point for ATP; that stretch reads GPTASGKT. 15 to 20 is a substrate binding site; sequence TASGKT. 4 interaction with substrate tRNA regions span residues 38–41, 162–166, 243–248, and 276–283; these read DSAL, QRLSR, RCVGYR, and KRQITWLR.

It belongs to the IPP transferase family. Monomer. Mg(2+) serves as cofactor.

It catalyses the reaction adenosine(37) in tRNA + dimethylallyl diphosphate = N(6)-dimethylallyladenosine(37) in tRNA + diphosphate. Its function is as follows. Catalyzes the transfer of a dimethylallyl group onto the adenine at position 37 in tRNAs that read codons beginning with uridine, leading to the formation of N6-(dimethylallyl)adenosine (i(6)A). The polypeptide is tRNA dimethylallyltransferase (Vibrio atlanticus (strain LGP32) (Vibrio splendidus (strain Mel32))).